Here is a 244-residue protein sequence, read N- to C-terminus: Extracellular superoxide dismutase [Cu-Zn] (244 aa).

Residues Met-1–Gly-15 form the signal peptide. Intrachain disulfides connect Cys-70–Cys-215 and Cys-132–Cys-214. Asn-114 carries N-linked (GlcNAc...) asparagine glycosylation. Positions 121, 123, and 138 each coordinate Cu cation. 4 residues coordinate Zn(2+): His-138, His-146, His-149, and Asp-152. A Cu cation-binding site is contributed by His-188. The interval Ala-224–Thr-244 is disordered.

Belongs to the Cu-Zn superoxide dismutase family. As to quaternary structure, homodimer. Interacts with ATP7A; this interaction is copper-dependent and is required for SOD3 activity. Cu cation serves as cofactor. Requires Zn(2+) as cofactor.

The protein resides in the secreted. It is found in the extracellular space. Its subcellular location is the golgi apparatus. The protein localises to the trans-Golgi network. The enzyme catalyses 2 superoxide + 2 H(+) = H2O2 + O2. Its function is as follows. Protect the extracellular space from toxic effect of reactive oxygen intermediates by converting superoxide radicals into hydrogen peroxide and oxygen. In Rattus norvegicus (Rat), this protein is Extracellular superoxide dismutase [Cu-Zn] (Sod3).